The primary structure comprises 697 residues: Potassium-transporting ATPase ATP-binding subunit (697 aa).

A run of 4 helical transmembrane segments spans residues 55–75 (PIMF…FLPS), 82–102 (GWFN…ANFA), 245–265 (LTFI…YLGF), and 271–291 (VLVA…LSAI). Residue aspartate 324 is the 4-aspartylphosphate intermediate of the active site. ATP contacts are provided by residues aspartate 361, glutamate 365, 393–400 (FKAETRMS), and lysine 412. Residues aspartate 535 and aspartate 539 each coordinate Mg(2+). The next 3 membrane-spanning stretches (helical) occupy residues 605–625 (FAII…LNIM), 633–653 (AILS…PLAM), and 677–697 (GGVI…GLFI).

It belongs to the cation transport ATPase (P-type) (TC 3.A.3) family. Type IA subfamily. As to quaternary structure, the system is composed of three essential subunits: KdpA, KdpB and KdpC.

The protein localises to the cell membrane. The enzyme catalyses K(+)(out) + ATP + H2O = K(+)(in) + ADP + phosphate + H(+). Functionally, part of the high-affinity ATP-driven potassium transport (or Kdp) system, which catalyzes the hydrolysis of ATP coupled with the electrogenic transport of potassium into the cytoplasm. This subunit is responsible for energy coupling to the transport system and for the release of the potassium ions to the cytoplasm. This is Potassium-transporting ATPase ATP-binding subunit from Bacillus cereus (strain AH187).